A 101-amino-acid chain; its full sequence is ATP synthase subunit c (101 aa).

The next 2 helical transmembrane spans lie at 35–55 (IGAG…GLIG) and 81–101 (GISE…IFVV).

Belongs to the ATPase C chain family. F-type ATPases have 2 components, F(1) - the catalytic core - and F(0) - the membrane proton channel. F(1) has five subunits: alpha(3), beta(3), gamma(1), delta(1), epsilon(1). F(0) has three main subunits: a(1), b(2) and c(10-14). The alpha and beta chains form an alternating ring which encloses part of the gamma chain. F(1) is attached to F(0) by a central stalk formed by the gamma and epsilon chains, while a peripheral stalk is formed by the delta and b chains.

Its subcellular location is the cell membrane. F(1)F(0) ATP synthase produces ATP from ADP in the presence of a proton or sodium gradient. F-type ATPases consist of two structural domains, F(1) containing the extramembraneous catalytic core and F(0) containing the membrane proton channel, linked together by a central stalk and a peripheral stalk. During catalysis, ATP synthesis in the catalytic domain of F(1) is coupled via a rotary mechanism of the central stalk subunits to proton translocation. Its function is as follows. Key component of the F(0) channel; it plays a direct role in translocation across the membrane. A homomeric c-ring of between 10-14 subunits forms the central stalk rotor element with the F(1) delta and epsilon subunits. The sequence is that of ATP synthase subunit c from Mycoplasma capricolum subsp. capricolum (strain California kid / ATCC 27343 / NCTC 10154).